Consider the following 216-residue polypeptide: Uracil phosphoribosyltransferase (216 aa).

Lysine 30 to lysine 34 contributes to the GTP binding site. Residues arginine 80, arginine 105, and aspartate 140–threonine 148 each bind 5-phospho-alpha-D-ribose 1-diphosphate. Uracil is bound by residues isoleucine 203 and glycine 208 to alanine 210. Aspartate 209 is a 5-phospho-alpha-D-ribose 1-diphosphate binding site.

It belongs to the UPRTase family. Mg(2+) serves as cofactor.

The catalysed reaction is UMP + diphosphate = 5-phospho-alpha-D-ribose 1-diphosphate + uracil. It participates in pyrimidine metabolism; UMP biosynthesis via salvage pathway; UMP from uracil: step 1/1. Allosterically activated by GTP. Functionally, catalyzes the conversion of uracil and 5-phospho-alpha-D-ribose 1-diphosphate (PRPP) to UMP and diphosphate. The chain is Uracil phosphoribosyltransferase from Sulfolobus acidocaldarius (strain ATCC 33909 / DSM 639 / JCM 8929 / NBRC 15157 / NCIMB 11770).